The sequence spans 516 residues: L-amino-acid oxidase (516 aa).

Residues 1 to 18 (MNVFFMFSLLFLAALGSC) form the signal peptide. C28 and C191 form a disulfide bridge. FAD contacts are provided by residues 61 to 62 (MA), 81 to 82 (EA), R89, and 105 to 108 (GPMR). R108 provides a ligand contact to substrate. N-linked (GlcNAc...) (complex) asparagine glycosylation occurs at N190. H241 provides a ligand contact to substrate. Residue V279 coordinates FAD. The cysteines at positions 349 and 430 are disulfide-linked. N-linked (GlcNAc...) (complex) asparagine glycosylation occurs at N379. Y390 lines the substrate pocket. Residues E475 and 482 to 487 (GWIDST) each bind FAD. 482–483 (GW) lines the substrate pocket.

In terms of assembly, homodimer; non-covalently linked. The cofactor is FAD. N-glycosylated at Asn-190 and Asn-379 with bis-sialylated, biantennary, core-fucosylated dodecasaccharide (composed of N-acetylglucosamine, fucose, mannose, galactose, and sialic acid residues). Expressed by the venom gland.

It localises to the secreted. It carries out the reaction an L-alpha-amino acid + O2 + H2O = a 2-oxocarboxylate + H2O2 + NH4(+). The catalysed reaction is L-leucine + O2 + H2O = 4-methyl-2-oxopentanoate + H2O2 + NH4(+). It catalyses the reaction L-phenylalanine + O2 + H2O = 3-phenylpyruvate + H2O2 + NH4(+). The enzyme catalyses L-tryptophan + O2 + H2O = indole-3-pyruvate + H2O2 + NH4(+). It carries out the reaction L-methionine + O2 + H2O = 4-methylsulfanyl-2-oxobutanoate + H2O2 + NH4(+). The catalysed reaction is L-isoleucine + O2 + H2O = (S)-3-methyl-2-oxopentanoate + H2O2 + NH4(+). It catalyses the reaction L-arginine + O2 + H2O = 5-guanidino-2-oxopentanoate + H2O2 + NH4(+). The enzyme catalyses L-aspartate + O2 + H2O = oxaloacetate + H2O2 + NH4(+). It carries out the reaction L-histidine + O2 + H2O = 3-(imidazol-5-yl)pyruvate + H2O2 + NH4(+). The catalysed reaction is L-2-aminohexanoate + O2 + H2O = 2-oxohexanoate + H2O2 + NH4(+). It catalyses the reaction L-2-aminopentanoate + O2 + H2O = 2-oxopentanoate + H2O2 + NH4(+). Its function is as follows. Catalyzes an oxidative deamination of predominantly hydrophobic and aromatic L-amino acids, thus producing hydrogen peroxide that may contribute to the diverse toxic effects of this enzyme. Shows high affinity for L-Phe, L-Trp, L-Met, L-Leu, and L-Ile, moderate affinity for L-Arg, L-Asp, and L-His, and very low affinity for L-Gln, L-Lys, and L-Ala. Also shows high activity on L-norleucine (L-2-aminohexanoate), and L-norvaline (L-2-aminopentanoate) and a weak activity on L-ornithine and L-aminobutyric acid. Also exhibits diverse biological activities, such as hemorrhage, hemolysis, edema, apoptosis of vascular endothelial cells or tumor cell lines, and antiparasitic activities, as well as regulation of platelet aggregation. Its effect on platelets is controversial, since it either induces aggregation or inhibits agonist-induced aggregation. These different effects are probably due to different experimental conditions. A possible explanation of high efficacy it that LAAO may bind to target cells through its sialylated glycan moiety that would bind to sialic acid-binding lectins (siglec) on target cells. This interaction may result in production of locally high concentrations of hydrogen peroxide in or near the binding interface, leading, in turn to oxidative damage of the siglec or another adjacent cell structural elements. The sequence is that of L-amino-acid oxidase from Calloselasma rhodostoma (Malayan pit viper).